The chain runs to 200 residues: Recombination protein RecR (200 aa).

The segment at 57-72 (CSECRTFTEEDTCAIC) adopts a C4-type zinc-finger fold. The Toprim domain occupies 81–176 (GEMCIVESPA…PASRIAHGVP (96 aa)).

This sequence belongs to the RecR family.

May play a role in DNA repair. It seems to be involved in an RecBC-independent recombinational process of DNA repair. It may act with RecF and RecO. The sequence is that of Recombination protein RecR from Aliivibrio fischeri (strain ATCC 700601 / ES114) (Vibrio fischeri).